The sequence spans 570 residues: Alpha-1,2-mannosyltransferase ALG9 (570 aa).

A disordered region spans residues 1-37 (MDLTTTRQRRPLISDSSSSSSTKSYSKTDKPGRSNGG). The segment covering 14 to 25 (SDSSSSSSTKSY) has biased composition (low complexity). Transmembrane regions (helical) follow at residues 129-149 (AVRL…VVAL), 160-180 (YAVA…SFLP), 208-228 (VVGV…VVIY), 237-257 (AFIA…LVDY), 297-317 (FNNF…YPVI), 324-344 (ALLV…LQPH), 349-369 (FLYP…ENIP), and 381-401 (SLLV…ILCA). N473 carries an N-linked (GlcNAc...) asparagine glycan.

Belongs to the glycosyltransferase 22 family.

Its subcellular location is the endoplasmic reticulum membrane. It carries out the reaction an alpha-D-Man-(1-&gt;2)-alpha-D-Man-(1-&gt;2)-alpha-D-Man-(1-&gt;3)-[alpha-D-Man-(1-&gt;3)-alpha-D-Man-(1-&gt;6)]-beta-D-Man-(1-&gt;4)-beta-D-GlcNAc-(1-&gt;4)-alpha-D-GlcNAc-diphospho-di-trans,poly-cis-dolichol + a di-trans,poly-cis-dolichyl beta-D-mannosyl phosphate = an alpha-D-Man-(1-&gt;2)-alpha-D-Man-(1-&gt;2)-alpha-D-Man-(1-&gt;3)-[alpha-D-Man-(1-&gt;2)-alpha-D-Man-(1-&gt;3)-alpha-D-Man-(1-&gt;6)]-beta-D-Man-(1-&gt;4)-beta-D-GlcNAc-(1-&gt;4)-alpha-D-GlcNAc-diphospho-di-trans,poly-cis-dolichol + a di-trans,poly-cis-dolichyl phosphate + H(+). The catalysed reaction is an alpha-D-Man-(1-&gt;2)-alpha-D-Man-(1-&gt;2)-alpha-D-Man-(1-&gt;3)-[alpha-D-Man-(1-&gt;2)-alpha-D-Man-(1-&gt;3)-[alpha-D-Man-(1-&gt;6)]-alpha-D-Man-(1-&gt;6)]-beta-D-Man-(1-&gt;4)-beta-D-GlcNAc-(1-&gt;4)-alpha-D-GlcNAc-diphospho-di-trans,poly-cis-dolichol + a di-trans,poly-cis-dolichyl beta-D-mannosyl phosphate = an alpha-D-Man-(1-&gt;2)-alpha-D-Man-(1-&gt;2)-alpha-D-Man-(1-&gt;3)-[alpha-D-Man-(1-&gt;2)-alpha-D-Man-(1-&gt;3)-[alpha-D-Man-(1-&gt;2)-alpha-D-Man-(1-&gt;6)]-alpha-D-Man-(1-&gt;6)]-beta-D-Man-(1-&gt;4)-beta-D-GlcNAc-(1-&gt;4)-alpha-D-GlcNAc-diphospho-di-trans,poly-cis-dolichol + a di-trans,poly-cis-dolichyl phosphate + H(+). It participates in protein modification; protein glycosylation. Functionally, mannosyltransferase that operates in the biosynthetic pathway of dolichol-linked oligosaccharides, the glycan precursors employed in protein asparagine (N)-glycosylation. The assembly of dolichol-linked oligosaccharides begins on the cytosolic side of the endoplasmic reticulum membrane and finishes in its lumen. The sequential addition of sugars to dolichol pyrophosphate produces dolichol-linked oligosaccharides containing fourteen sugars, including two GlcNAcs, nine mannoses and three glucoses. Once assembled, the oligosaccharide is transferred from the lipid to nascent proteins by oligosaccharyltransferases. In the lumen of the endoplasmic reticulum, catalyzes the addition of the seventh and ninth alpha-1,2-linked mannose residues to Man(6)GlcNAc(2)-PP-dolichol and Man(8)GlcNAc(2)-PP-dolichol respectively. The sequence is that of Alpha-1,2-mannosyltransferase ALG9 (ALG9) from Arabidopsis thaliana (Mouse-ear cress).